The chain runs to 290 residues: Probable septum site-determining protein MinC (290 aa).

This sequence belongs to the MinC family. Interacts with MinD and FtsZ.

In terms of biological role, cell division inhibitor that blocks the formation of polar Z ring septums. Rapidly oscillates between the poles of the cell to destabilize FtsZ filaments that have formed before they mature into polar Z rings. Prevents FtsZ polymerization. This chain is Probable septum site-determining protein MinC, found in Heliobacterium modesticaldum (strain ATCC 51547 / Ice1).